A 126-amino-acid chain; its full sequence is Large ribosomal subunit protein bL12 (126 aa).

Positions 36–55 (APAPAAAPAAGGDQGGAEAA) are enriched in low complexity. The tract at residues 36-57 (APAPAAAPAAGGDQGGAEAAEQ) is disordered.

This sequence belongs to the bacterial ribosomal protein bL12 family. Homodimer. Part of the ribosomal stalk of the 50S ribosomal subunit. Forms a multimeric L10(L12)X complex, where L10 forms an elongated spine to which 2 to 4 L12 dimers bind in a sequential fashion. Binds GTP-bound translation factors.

Functionally, forms part of the ribosomal stalk which helps the ribosome interact with GTP-bound translation factors. Is thus essential for accurate translation. The chain is Large ribosomal subunit protein bL12 from Natranaerobius thermophilus (strain ATCC BAA-1301 / DSM 18059 / JW/NM-WN-LF).